We begin with the raw amino-acid sequence, 70 residues long: Ranatuerin-2SN1 (70 aa).

The first 22 residues, 1–22 (MFTLKKSLLLIFFLGTISLSLC), serve as a signal peptide directing secretion. A propeptide spans 23-40 (EKERDADDDEVEVIKQEE) (removed in mature form). Cys-65 and Cys-70 are oxidised to a cystine.

The protein belongs to the frog skin active peptide (FSAP) family. Ranatuerin subfamily. Expressed by the skin glands.

The protein resides in the secreted. In terms of biological role, antimicrobial peptide. Weakly active against P.faecalis X29. Not active against fungi. Shows very weak hemolytic activity against human erythrocytes. The polypeptide is Ranatuerin-2SN1 (Sylvirana spinulosa (Fine-spined frog)).